A 444-amino-acid polypeptide reads, in one-letter code: Tubulin beta-4A chain (444 aa).

An MREI motif motif is present at residues 1–4 (MREI). Residues Gln11, Glu69, Ser138, Gly142, Thr143, and Gly144 each coordinate GTP. Glu69 is a binding site for Mg(2+). Ser172 carries the post-translational modification Phosphoserine; by CDK1. GTP contacts are provided by Asn204 and Asn226. A 5-glutamyl polyglutamate modification is found at Glu436.

It belongs to the tubulin family. In terms of assembly, dimer of alpha and beta chains. A typical microtubule is a hollow water-filled tube with an outer diameter of 25 nm and an inner diameter of 15 nM. Alpha-beta heterodimers associate head-to-tail to form protofilaments running lengthwise along the microtubule wall with the beta-tubulin subunit facing the microtubule plus end conferring a structural polarity. Microtubules usually have 13 protofilaments but different protofilament numbers can be found in some organisms and specialized cells. It depends on Mg(2+) as a cofactor. Some glutamate residues at the C-terminus are polyglycylated, resulting in polyglycine chains on the gamma-carboxyl group. Glycylation is mainly limited to tubulin incorporated into axonemes (cilia and flagella) whereas glutamylation is prevalent in neuronal cells, centrioles, axonemes, and the mitotic spindle. Both modifications can coexist on the same protein on adjacent residues, and lowering polyglycylation levels increases polyglutamylation, and reciprocally. Cilia and flagella glycylation is required for their stability and maintenance. Flagella glycylation controls sperm motility. In terms of processing, some glutamate residues at the C-terminus are polyglutamylated, resulting in polyglutamate chains on the gamma-carboxyl group. Polyglutamylation plays a key role in microtubule severing by spastin (SPAST). SPAST preferentially recognizes and acts on microtubules decorated with short polyglutamate tails: severing activity by SPAST increases as the number of glutamates per tubulin rises from one to eight, but decreases beyond this glutamylation threshold. Glutamylation is also involved in cilia motility. Post-translationally, phosphorylated on Ser-172 by CDK1 during the cell cycle, from metaphase to telophase, but not in interphase. This phosphorylation inhibits tubulin incorporation into microtubules.

It localises to the cytoplasm. The protein localises to the cytoskeleton. Its function is as follows. Tubulin is the major constituent of microtubules, a cylinder consisting of laterally associated linear protofilaments composed of alpha- and beta-tubulin heterodimers. Microtubules grow by the addition of GTP-tubulin dimers to the microtubule end, where a stabilizing cap forms. Below the cap, tubulin dimers are in GDP-bound state, owing to GTPase activity of alpha-tubulin. The polypeptide is Tubulin beta-4A chain (TUBB4A) (Bos taurus (Bovine)).